A 155-amino-acid polypeptide reads, in one-letter code: MQRIEATLLAHDLKFALVSTRWNHLIVDRLVEGAELAFVQHGGKTENLDHFLVPGSYEVPLVARRLAETGRYDAVVCLGAVIKGDTDHYDFVAGGAANGILNTSLHTGVPVAFGVLTTDTVEQALNRAGIKAGNKGGEAVLAMIETANLLKQIER.

Residues Trp22, Ser56–Glu58, and Ala80–Ile82 each bind 5-amino-6-(D-ribitylamino)uracil. Position 85–86 (Asp85–Thr86) interacts with (2S)-2-hydroxy-3-oxobutyl phosphate. His88 functions as the Proton donor in the catalytic mechanism. Phe113 provides a ligand contact to 5-amino-6-(D-ribitylamino)uracil. Arg127 serves as a coordination point for (2S)-2-hydroxy-3-oxobutyl phosphate.

Belongs to the DMRL synthase family.

The catalysed reaction is (2S)-2-hydroxy-3-oxobutyl phosphate + 5-amino-6-(D-ribitylamino)uracil = 6,7-dimethyl-8-(1-D-ribityl)lumazine + phosphate + 2 H2O + H(+). The protein operates within cofactor biosynthesis; riboflavin biosynthesis; riboflavin from 2-hydroxy-3-oxobutyl phosphate and 5-amino-6-(D-ribitylamino)uracil: step 1/2. Its function is as follows. Catalyzes the formation of 6,7-dimethyl-8-ribityllumazine by condensation of 5-amino-6-(D-ribitylamino)uracil with 3,4-dihydroxy-2-butanone 4-phosphate. This is the penultimate step in the biosynthesis of riboflavin. The sequence is that of 6,7-dimethyl-8-ribityllumazine synthase from Deinococcus radiodurans (strain ATCC 13939 / DSM 20539 / JCM 16871 / CCUG 27074 / LMG 4051 / NBRC 15346 / NCIMB 9279 / VKM B-1422 / R1).